Consider the following 311-residue polypeptide: Methionyl-tRNA formyltransferase (311 aa).

A (6S)-5,6,7,8-tetrahydrofolate-binding site is contributed by 109-112 (SLLP).

Belongs to the Fmt family.

The enzyme catalyses L-methionyl-tRNA(fMet) + (6R)-10-formyltetrahydrofolate = N-formyl-L-methionyl-tRNA(fMet) + (6S)-5,6,7,8-tetrahydrofolate + H(+). In terms of biological role, attaches a formyl group to the free amino group of methionyl-tRNA(fMet). The formyl group appears to play a dual role in the initiator identity of N-formylmethionyl-tRNA by promoting its recognition by IF2 and preventing the misappropriation of this tRNA by the elongation apparatus. In Acetivibrio thermocellus (strain ATCC 27405 / DSM 1237 / JCM 9322 / NBRC 103400 / NCIMB 10682 / NRRL B-4536 / VPI 7372) (Clostridium thermocellum), this protein is Methionyl-tRNA formyltransferase.